We begin with the raw amino-acid sequence, 226 residues long: UPF0758 protein SUB0843 (226 aa).

Residues glutamine 103–isoleucine 225 enclose the MPN domain. Residues histidine 174, histidine 176, and aspartate 187 each coordinate Zn(2+). The short motif at histidine 174–aspartate 187 is the JAMM motif element.

It belongs to the UPF0758 family.

This chain is UPF0758 protein SUB0843, found in Streptococcus uberis (strain ATCC BAA-854 / 0140J).